The sequence spans 207 residues: Guanylate kinase (207 aa).

In terms of domain architecture, Guanylate kinase-like spans 5 to 183 (GTLYIISAPS…ALYELEAIVE (179 aa)). An ATP-binding site is contributed by 12–19 (APSGAGKT).

It belongs to the guanylate kinase family.

The protein localises to the cytoplasm. The enzyme catalyses GMP + ATP = GDP + ADP. Functionally, essential for recycling GMP and indirectly, cGMP. This Alcanivorax borkumensis (strain ATCC 700651 / DSM 11573 / NCIMB 13689 / SK2) protein is Guanylate kinase.